Here is a 76-residue protein sequence, read N- to C-terminus: Small ribosomal subunit protein bS18 (76 aa).

It belongs to the bacterial ribosomal protein bS18 family. Part of the 30S ribosomal subunit. Forms a tight heterodimer with protein bS6.

Functionally, binds as a heterodimer with protein bS6 to the central domain of the 16S rRNA, where it helps stabilize the platform of the 30S subunit. In Pseudomonas entomophila (strain L48), this protein is Small ribosomal subunit protein bS18.